A 433-amino-acid chain; its full sequence is Trigger factor (433 aa).

A PPIase FKBP-type domain is found at 161–246; the sequence is GKRVSIDFVG…VNKVEARELP (86 aa).

This sequence belongs to the FKBP-type PPIase family. Tig subfamily.

Its subcellular location is the cytoplasm. It carries out the reaction [protein]-peptidylproline (omega=180) = [protein]-peptidylproline (omega=0). Its function is as follows. Involved in protein export. Acts as a chaperone by maintaining the newly synthesized protein in an open conformation. Functions as a peptidyl-prolyl cis-trans isomerase. This is Trigger factor from Vibrio cholerae serotype O1 (strain ATCC 39541 / Classical Ogawa 395 / O395).